A 195-amino-acid chain; its full sequence is Obelin (195 aa).

Residues 1–6 (MSSKYA) constitute a propeptide that is removed on maturation. 4 EF-hand domains span residues 17-52 (RWIKRHKHMFDFLDINGNGKITLDEIVSKASDDICA), 53-88 (KLEATPEQTKRHQVCVEAFFRGCGMEYGKEIAFPQF), 110-145 (LIREWGDAVFDIFDKDGSGTITLDEWKAYGKISGIS), and 146-181 (PSQEDCEATFRHCDLDNSGDLDVDEMTRQHLGFWYT). Residues D30, N32, N34, K36, and E41 each contribute to the Ca(2+) site. Residues D123, D125, S127, T129, E134, D159, D161, S163, D165, and E170 each coordinate Ca(2+).

The protein belongs to the aequorin family.

Its function is as follows. Ca(2+)-dependent bioluminescence photoprotein. Displays an emission peak at 470 nm (blue light). Trace amounts of calcium ion trigger the intramolecular oxidation of the chromophore, coelenterazine into coelenteramide and CO(2) with the concomitant emission of light. This Obelia longissima (Black sea hydrozoan) protein is Obelin.